Here is a 309-residue protein sequence, read N- to C-terminus: MEFKHISVLLEETIDSLNIKEDGVYVDCTLGGGGHSKEILKKLSHKGKLIGIDQDTSAIKAAKERLKDYENVIYVHNNFYNIDSILEELDIDKVDGIIMDLGVSSYQLDEASRGFSYMKDAPLDMRMNREENFSAYNVVNSYEEEELFRIFKNYGEEKFSRKIARFIVEKRTENPIETTGELVEIIRKAIPAKFQREGHPAKRTFQAIRIEVNKELQILNKAIEDSVNRLNKDGRLSIITFHSLEDRIVKVKFKELEKPCTCPPSFPICVCGKEPQIKIITKKPIEPSKEEKEINSRSRSAKLRVCRKI.

S-adenosyl-L-methionine is bound by residues 33–35 (GGH), Asp-53, Phe-79, Asp-100, and Gln-107.

The protein belongs to the methyltransferase superfamily. RsmH family.

The protein localises to the cytoplasm. The catalysed reaction is cytidine(1402) in 16S rRNA + S-adenosyl-L-methionine = N(4)-methylcytidine(1402) in 16S rRNA + S-adenosyl-L-homocysteine + H(+). Specifically methylates the N4 position of cytidine in position 1402 (C1402) of 16S rRNA. The sequence is that of Ribosomal RNA small subunit methyltransferase H from Clostridium botulinum (strain Loch Maree / Type A3).